A 269-amino-acid polypeptide reads, in one-letter code: Tryptophan synthase alpha chain (269 aa).

Active-site proton acceptor residues include Glu-45 and Asp-56.

The protein belongs to the TrpA family. As to quaternary structure, tetramer of two alpha and two beta chains.

The catalysed reaction is (1S,2R)-1-C-(indol-3-yl)glycerol 3-phosphate + L-serine = D-glyceraldehyde 3-phosphate + L-tryptophan + H2O. The protein operates within amino-acid biosynthesis; L-tryptophan biosynthesis; L-tryptophan from chorismate: step 5/5. Its function is as follows. The alpha subunit is responsible for the aldol cleavage of indoleglycerol phosphate to indole and glyceraldehyde 3-phosphate. This Shouchella clausii (strain KSM-K16) (Alkalihalobacillus clausii) protein is Tryptophan synthase alpha chain.